The primary structure comprises 145 residues: MLNEFKAFIARGNVMDLAVGVIIGGAFGGIVKSLVDDLIMPIVGAIFGGFDFSNYFLPLSSAVNAPTLAAARAQGAVFAYGSFLTVLINFLILAWIIFLMVKGVNYLRMQVERQEEAAPEELPPPPADVQLLTEIRDLLARRPAV.

3 consecutive transmembrane segments (helical) span residues Val14 to Leu34, Leu38 to Pro58, and Gly81 to Val101.

It belongs to the MscL family. In terms of assembly, homopentamer.

The protein localises to the cell inner membrane. Functionally, channel that opens in response to stretch forces in the membrane lipid bilayer. May participate in the regulation of osmotic pressure changes within the cell. The chain is Large-conductance mechanosensitive channel from Rhizobium etli (strain CIAT 652).